The chain runs to 340 residues: Uridine nucleosidase (340 aa).

Residue histidine 254 is part of the active site.

Belongs to the IUNH family.

It localises to the cytoplasm. The protein resides in the nucleus. It carries out the reaction uridine + H2O = D-ribose + uracil. Also acts on cytidine. In Saccharomyces cerevisiae (strain ATCC 204508 / S288c) (Baker's yeast), this protein is Uridine nucleosidase (URH1).